Here is a 231-residue protein sequence, read N- to C-terminus: Androgen-dependent TFPI-regulating protein (231 aa).

Topologically, residues 1-7 are cytoplasmic; it reads MTRTTTC. A helical membrane pass occupies residues 8–28; the sequence is VYHFLVWNWYIFLNYYIPLIG. Residues 29–45 are Extracellular-facing; that stretch reads KDDEKLKEFHDGGRSKY. The chain crosses the membrane as a helical span at residues 46-66; sequence LTLLNLLLQAIFFGVACLDDV. Over 67 to 85 the chain is Cytoplasmic; the sequence is LKRIIGRKDIKFITSTRDL. The helical transmembrane segment at 86–106 threads the bilayer; that stretch reads LFSTLVFPISTFIFLVFWTLF. The Extracellular portion of the chain corresponds to 107–123; that stretch reads YYDRSLIYPKGLDDYFP. Residues 124-144 traverse the membrane as a helical segment; the sequence is AWLNHAMHTYILLFVLVETIL. At 145–154 the chain is on the cytoplasmic side; sequence RPHHYPSKKL. A helical membrane pass occupies residues 155 to 172; that stretch reads GLALLGACNLAYITRVLW. Over 173–190 the chain is Extracellular; that stretch reads RYSQTGNWVYPVFASLNP. The helical transmembrane segment at 191–211 threads the bilayer; sequence LGIIIFFLVCYILNASIYLVG. The Cytoplasmic portion of the chain corresponds to 212-231; that stretch reads EKINHWKWGATVKPLMKKKK.

This sequence belongs to the AIG1 family. In terms of tissue distribution, highly expressed in flank organs and weakly in testis and earlobes.

Its subcellular location is the cell membrane. It catalyses the reaction 9-hexadecanoyloxy-octadecanoate + H2O = 9-hydroxy-octadecanoate + hexadecanoate + H(+). The catalysed reaction is 12-hexadecanoyloxy-octadecanoate + H2O = 12-hydroxyoctadecanoate + hexadecanoate + H(+). It carries out the reaction 9-(9Z-hexadecenoyloxy)-octadecanoate + H2O = (9Z)-hexadecenoate + 9-hydroxy-octadecanoate + H(+). The enzyme catalyses 12-(9Z-hexadecenoyloxy)-octadecanoate + H2O = 12-hydroxyoctadecanoate + (9Z)-hexadecenoate + H(+). It catalyses the reaction 13-(9Z-hexadecenoyloxy)-octadecanoate + H2O = 13-hydroxy-octadecanoate + (9Z)-hexadecenoate + H(+). The catalysed reaction is 9-octadecanoyloxy-octadecanoate + H2O = 9-hydroxy-octadecanoate + octadecanoate + H(+). It carries out the reaction 12-octadecanoyloxy-octadecanoate + H2O = 12-hydroxyoctadecanoate + octadecanoate + H(+). The enzyme catalyses 13-octadecanoyloxy-octadecanoate + H2O = 13-hydroxy-octadecanoate + octadecanoate + H(+). It catalyses the reaction 9-(9Z-octadecenoyloxy)-octadecanoate + H2O = 9-hydroxy-octadecanoate + (9Z)-octadecenoate + H(+). The catalysed reaction is 12-(9Z-octadecenoyloxy)-octadecanoate + H2O = 12-hydroxyoctadecanoate + (9Z)-octadecenoate + H(+). It carries out the reaction 13-(9Z-octadecenoyloxy)-octadecanoate + H2O = 13-hydroxy-octadecanoate + (9Z)-octadecenoate + H(+). The enzyme catalyses 5-(9Z-octadecenoyloxy)-octadecanoate + H2O = 5-hydroxy-octadecanoate + (9Z)-octadecenoate + H(+). In terms of biological role, hydrolyzes bioactive fatty-acid esters of hydroxy-fatty acids (FAHFAs), but not other major classes of lipids. Shows a preference for FAHFAs with branching distal from the carboxylate head group of the lipids. Regulates the expression and the cell-associated anticoagulant activity of the inhibitor TFPI in endothelial cells (in vitro). The protein is Androgen-dependent TFPI-regulating protein (ADTRP) of Mesocricetus auratus (Golden hamster).